The chain runs to 150 residues: Large ribosomal subunit protein bL9 (150 aa).

Belongs to the bacterial ribosomal protein bL9 family.

Binds to the 23S rRNA. The sequence is that of Large ribosomal subunit protein bL9 from Variovorax paradoxus (strain S110).